The primary structure comprises 208 residues: Small ribosomal subunit protein uS4 (208 aa).

In terms of domain architecture, S4 RNA-binding spans 97–158 (TRLDNVIYRM…RAQKYLCVQE (62 aa)).

Belongs to the universal ribosomal protein uS4 family. As to quaternary structure, part of the 30S ribosomal subunit. Contacts protein S5. The interaction surface between S4 and S5 is involved in control of translational fidelity.

Its function is as follows. One of the primary rRNA binding proteins, it binds directly to 16S rRNA where it nucleates assembly of the body of the 30S subunit. With S5 and S12 plays an important role in translational accuracy. The chain is Small ribosomal subunit protein uS4 from Xylella fastidiosa (strain 9a5c).